Consider the following 209-residue polypeptide: dTTP/UTP pyrophosphatase (209 aa).

Aspartate 79 (proton acceptor) is an active-site residue.

The protein belongs to the Maf family. YhdE subfamily. A divalent metal cation is required as a cofactor.

The protein resides in the cytoplasm. It catalyses the reaction dTTP + H2O = dTMP + diphosphate + H(+). The enzyme catalyses UTP + H2O = UMP + diphosphate + H(+). Functionally, nucleoside triphosphate pyrophosphatase that hydrolyzes dTTP and UTP. May have a dual role in cell division arrest and in preventing the incorporation of modified nucleotides into cellular nucleic acids. The polypeptide is dTTP/UTP pyrophosphatase (Chelativorans sp. (strain BNC1)).